Reading from the N-terminus, the 238-residue chain is Uridylate kinase (238 aa).

ATP is bound at residue 12-15; sequence KLSG. Gly-54 contributes to the UMP binding site. Gly-55 and Arg-59 together coordinate ATP. UMP is bound by residues Asp-74 and 135–142; that span reads TGNPFFTT. Positions 162, 168, and 171 each coordinate ATP.

The protein belongs to the UMP kinase family. As to quaternary structure, homohexamer.

It is found in the cytoplasm. It catalyses the reaction UMP + ATP = UDP + ADP. The protein operates within pyrimidine metabolism; CTP biosynthesis via de novo pathway; UDP from UMP (UMPK route): step 1/1. Inhibited by UTP. Catalyzes the reversible phosphorylation of UMP to UDP. This is Uridylate kinase from Methylobacillus flagellatus (strain ATCC 51484 / DSM 6875 / VKM B-1610 / KT).